A 230-amino-acid polypeptide reads, in one-letter code: Thymidylate synthase 1 (230 aa).

92 to 93 is a binding site for dUMP; sequence RR. Cys-112 serves as the catalytic Nucleophile. DUMP contacts are provided by residues 132 to 135, Asn-143, and 173 to 175; these read RSND and HVY. Asp-135 contacts (6R)-5,10-methylene-5,6,7,8-tetrahydrofolate.

Belongs to the thymidylate synthase family. Bacterial-type ThyA subfamily. In terms of assembly, homodimer.

The protein resides in the cytoplasm. The enzyme catalyses dUMP + (6R)-5,10-methylene-5,6,7,8-tetrahydrofolate = 7,8-dihydrofolate + dTMP. The protein operates within pyrimidine metabolism; dTTP biosynthesis. Catalyzes the reductive methylation of 2'-deoxyuridine-5'-monophosphate (dUMP) to 2'-deoxythymidine-5'-monophosphate (dTMP) while utilizing 5,10-methylenetetrahydrofolate (mTHF) as the methyl donor and reductant in the reaction, yielding dihydrofolate (DHF) as a by-product. This enzymatic reaction provides an intracellular de novo source of dTMP, an essential precursor for DNA biosynthesis. This Bacillus amyloliquefaciens (Bacillus velezensis) protein is Thymidylate synthase 1.